The sequence spans 672 residues: DNA-directed RNA polymerase subunit gamma (672 aa).

Zn(2+)-binding residues include Cys70, Cys72, Cys85, and Cys88. Mg(2+) is bound by residues Asp466, Asp468, and Asp470.

Belongs to the RNA polymerase beta' chain family. RpoC1 subfamily. In cyanobacteria the RNAP catalytic core is composed of 2 alpha, 1 beta, 1 beta', 1 gamma and 1 omega subunit. When a sigma factor is associated with the core the holoenzyme is formed, which can initiate transcription. Mg(2+) is required as a cofactor. The cofactor is Zn(2+).

It carries out the reaction RNA(n) + a ribonucleoside 5'-triphosphate = RNA(n+1) + diphosphate. Its function is as follows. DNA-dependent RNA polymerase catalyzes the transcription of DNA into RNA using the four ribonucleoside triphosphates as substrates. This chain is DNA-directed RNA polymerase subunit gamma, found in Trichodesmium erythraeum (strain IMS101).